The chain runs to 185 residues: Ribosome-recycling factor (185 aa).

It belongs to the RRF family.

Its subcellular location is the cytoplasm. Its function is as follows. Responsible for the release of ribosomes from messenger RNA at the termination of protein biosynthesis. May increase the efficiency of translation by recycling ribosomes from one round of translation to another. This is Ribosome-recycling factor from Pseudomonas fluorescens (strain SBW25).